Reading from the N-terminus, the 1587-residue chain is Mediator of RNA polymerase II transcription subunit 23 (1587 aa).

Disordered stretches follow at residues 1374–1484 and 1567–1587; these read SQSE…QLQH and QHQQ…QQPH. Basic and acidic residues predominate over residues 1385–1404; that stretch reads PPEKEKSPEKEKEQEQEQHV. Residues 1387–1404 form an acidic region; it reads EKEKSPEKEKEQEQEQHV. Residues 1410 to 1426 show a composition bias toward polar residues; sequence LESTPSVSSLPQMQHHL. The segment covering 1430–1450 has biased composition (low complexity); it reads PLLPSHQMMPPPQQHSSSLQH. Positions 1463-1484 are enriched in polar residues; it reads DTSQHQTIQQQSNHPTQQQLQH. The span at 1567 to 1576 shows a compositional bias: low complexity; sequence QHQQYMQQQQ. Residues 1577-1587 show a composition bias toward basic residues; it reads QHHHQHQQQPH.

This sequence belongs to the Mediator complex subunit 23 family. As to quaternary structure, component of the Mediator complex. Interacts with let-19/mdt-13.

The protein resides in the nucleus. In terms of biological role, component of the Mediator complex, a coactivator involved in regulated gene transcription of nearly all RNA polymerase II-dependent genes. Mediator functions as a bridge to convey information from gene-specific regulatory proteins to the basal RNA polymerase II transcription machinery. Mediator is recruited to promoters by direct interactions with regulatory proteins and serves as a scaffold for the assembly of a functional pre-initiation complex with RNA polymerase II and the general transcription factors. Functions downstream of receptor let-23 and let-60/Ras during vulval induction likely by down-regulating the expression of phosphatase dep-1 and lin-12/Notch in vulva precursor cell descendants with a primary cell fate. Acts to repress beta-catenin target genes. Required for asymmetric division of T-cells. Plays a role in responses to M.nematophilum-mediated bacterial infection by promoting tail swelling and preventing constipation. This is Mediator of RNA polymerase II transcription subunit 23 (sur-2) from Caenorhabditis elegans.